The chain runs to 496 residues: Cytochrome P450 71A15 (496 aa).

Residues 3–23 (IIIISLCLATILAFLLLKPLL) traverse the membrane as a helical segment. Residue Cys439 participates in heme binding.

It belongs to the cytochrome P450 family. It depends on heme as a cofactor.

The protein localises to the membrane. This is Cytochrome P450 71A15 (CYP71A15) from Arabidopsis thaliana (Mouse-ear cress).